The chain runs to 243 residues: Coenzyme F420 hydrogenase subunit gamma (243 aa).

4Fe-4S ferredoxin-type domains follow at residues 182-210 (IKEV…DMVE) and 211-241 (AKPN…IIRK). The [4Fe-4S] cluster site is built by C191, C194, C197, C201, C220, C223, C226, and C230.

Belongs to the FrhG family. In terms of assembly, complex of alpha, beta and gamma subunits. Ni(2+) serves as cofactor. The cofactor is iron-sulfur cluster. Requires FAD as cofactor.

The catalysed reaction is oxidized coenzyme F420-(gamma-L-Glu)(n) + H2 + H(+) = reduced coenzyme F420-(gamma-L-Glu)(n). Functionally, reduces the physiological low-potential two-electron acceptor coenzyme F420, and the artificial one-electron acceptor methylviologen. In Methanococcus voltae, this protein is Coenzyme F420 hydrogenase subunit gamma (frhG).